The chain runs to 547 residues: Membrane transporter D1 (547 aa).

Residues 1-2 (MR) are Cytoplasmic-facing. Residues 3 to 25 (ASVMLCAALGGFLFGYDTGVINA) traverse the membrane as a helical segment. Residues 26 to 43 (ALFQMKDHFGFSEHSWQY) lie on the Extracellular side of the membrane. The helical transmembrane segment at 44-64 (ALIVAIAIAGAFVGAFISGFI) threads the bilayer. Over 65-78 (SAAFGRRPCIAVAD) the chain is Cytoplasmic. The chain crosses the membrane as a helical span at residues 79–99 (ALFVIGSVLMGAAPNVEVVLV). Over 100 to 101 (SR) the chain is Extracellular. The chain crosses the membrane as a helical span at residues 102–122 (VIVGLAIGISSATIPVYLAEV). At 123 to 136 (TSPKHRGATIVLNN) the chain is on the cytoplasmic side. A helical transmembrane segment spans residues 137–157 (LFLTGGQFVAAGFTAIMVVFT). The Extracellular portion of the chain corresponds to 158–164 (SKNIGWR). A helical transmembrane segment spans residues 165 to 185 (VAIGIGALPAVVQAFCLLFFL). Residues 186–245 (PESPRWLLSKGHADRAKAVADKFEVDLCEFQEGDELPSVRIDYRPLMARDMRFRVVLSSG) lie on the Cytoplasmic side of the membrane. A helical membrane pass occupies residues 246–266 (LQIIQQFSGINTIMYYSSVIL). Topologically, residues 267–276 (YDAGFRDAIM) are extracellular. Residues 277–297 (PVVLSIPLAFMNALFTAVAIF) form a helical membrane-spanning segment. Residues 298 to 308 (TVDRFGRRRML) lie on the Cytoplasmic side of the membrane. A helical membrane pass occupies residues 309–329 (LISVFGCLVLLVVIAIIGFFI). Residues 330-339 (GTRISYSVGG) lie on the Extracellular side of the membrane. A helical membrane pass occupies residues 340–360 (GLFLALLAVFLALYAPGIGCI). Topologically, residues 361-385 (PWVIMGEIFPTHLRTSAASVATMAN) are cytoplasmic. A helical membrane pass occupies residues 386 to 406 (WGANVLVSQVFPILMGAIGVG). Gly-407 is a topological domain (extracellular). A helical transmembrane segment spans residues 408-428 (TFTIISGLMALGCIFVYFFAV). At 429 to 547 (ETKGLTLEQI…AIKAAPHEPK (119 aa)) the chain is on the cytoplasmic side. Disordered regions lie at residues 449-468 (PPRF…YRED) and 510-547 (VSNK…HEPK). A compositionally biased stretch (polar residues) spans 519 to 529 (TSSSSDPQSLE).

This sequence belongs to the major facilitator superfamily. Sugar transporter (TC 2.A.1.1) family.

It is found in the membrane. This Leishmania donovani protein is Membrane transporter D1.